The following is a 1350-amino-acid chain: ABC-type transporter MDR1 (1350 aa).

The segment covering M1–S11 has biased composition (basic and acidic residues). A disordered region spans residues M1–L84. Over residues V22–G33 the composition is skewed to polar residues. The segment covering K52–K63 has biased composition (basic residues). The ABC transmembrane type-1 1 domain maps to V121–T411. 6 helical membrane-spanning segments follow: residues A124–L144, L170–F190, K243–I263, I271–V291, G350–M370, and I380–G400. An ABC transporter 1 domain is found at I446–A691. Residue G481–S488 participates in ATP binding. A compositionally biased stretch (basic and acidic residues) spans K712 to K731. The tract at residues K712–R734 is disordered. The next 6 helical transmembrane spans lie at I779 to A799, F830 to C850, L903 to I923, L929 to L949, A1014 to I1034, and F1044 to F1064. The ABC transmembrane type-1 2 domain maps to I779–K1070. Residues I1105–L1343 enclose the ABC transporter 2 domain. The N-linked (GlcNAc...) asparagine glycan is linked to N1127. G1140 to S1147 is a binding site for ATP.

This sequence belongs to the ABC transporter superfamily. ABCB family. Multidrug resistance exporter (TC 3.A.1.201) subfamily.

It localises to the cell membrane. Its function is as follows. ABC-type transporter that is involved in the secretion of liamocins, glycolipids (also called heavy oils) composed of a single mannitol or arabitol headgroup linked to either three, four or even six 3,5-dihydroxydecanoic ester tail-groups. This chain is ABC-type transporter MDR1, found in Aureobasidium melanogenum (Aureobasidium pullulans var. melanogenum).